The primary structure comprises 201 residues: Small ribosomal subunit protein uS4c (201 aa).

In terms of domain architecture, S4 RNA-binding spans 89-150 (MRLDNILFRL…KERSKALIQN (62 aa)).

Belongs to the universal ribosomal protein uS4 family. In terms of assembly, part of the 30S ribosomal subunit. Contacts protein S5. The interaction surface between S4 and S5 is involved in control of translational fidelity.

The protein resides in the plastid. It localises to the chloroplast. Functionally, one of the primary rRNA binding proteins, it binds directly to 16S rRNA where it nucleates assembly of the body of the 30S subunit. In terms of biological role, with S5 and S12 plays an important role in translational accuracy. This chain is Small ribosomal subunit protein uS4c (rps4), found in Phalaenopsis aphrodite subsp. formosana (Moth orchid).